The chain runs to 423 residues: Transcription factor IIIB 50 kDa subunit (423 aa).

The segment at 1–34 (MSKNCPECGSSRVVEDDLYSQKQWVCEDCGSVVS) adopts a TFIIB-type zinc-finger fold. Zn(2+) contacts are provided by cysteine 5, cysteine 8, cysteine 26, and cysteine 29. Copy 2 of the repeat occupies 171–245 (LESFCYDFKL…LARMKYSLMK (75 aa)). Residues 325–340 (QTSQYSESELSDSKSS) show a composition bias toward low complexity. Positions 325–358 (QTSQYSESELSDSKSSVQTQCKSPPDEEDEGCEL) are disordered. Cysteine 373 bears the Cysteine sulfenic acid (-SOH) mark.

Belongs to the TFIIB family. As to quaternary structure, component of TFIIIB complexes. Interacts with TBP and forms a ternary complex with TBp and target DNA sequences. In response to oxidative stress, a Cys-residue is reversibly oxidized to cysteine sulfenic acid. This impairs formation of a ternary complex with TBP and DNA and down-regulates expression of target genes in response to oxidative stress.

It is found in the nucleus. General activator of RNA polymerase III transcription. Factor exclusively required for RNA polymerase III transcription of genes with promoter elements upstream of the initiation sites. Contributes to the regulation of gene expression; functions as activator in the absence of oxidative stress. Down-regulates expression of target genes in response to oxidative stress. Overexpression protects cells against apoptosis in response to oxidative stress. This is Transcription factor IIIB 50 kDa subunit (brf2) from Danio rerio (Zebrafish).